Consider the following 132-residue polypeptide: MTWEYALIGLVVGIIIGAVAMRFGNRKLRQQQALQYELEKNKAELDEYREELVSHFARSAELLDTMAHDYRQLYQHMAKSSSSLLPELSAEANPFRNRLAESEASNDQAPVQMPRDYSEGASGLLRTGAKRD.

Residues 1 to 21 form a helical membrane-spanning segment; the sequence is MTWEYALIGLVVGIIIGAVAM. Residues 95-132 form a disordered region; the sequence is FRNRLAESEASNDQAPVQMPRDYSEGASGLLRTGAKRD.

It belongs to the ZapG family.

It localises to the cell inner membrane. Involved in cell division, cell envelope biogenesis and cell shape maintenance. The chain is Z-ring associated protein G from Escherichia coli O157:H7.